Consider the following 167-residue polypeptide: CS6 fimbrial subunit B (167 aa).

Residues 1–21 (MLKKIISAIALIAGTSGVVNA) form the signal peptide.

It localises to the fimbrium. This Escherichia coli protein is CS6 fimbrial subunit B (cssB).